The sequence spans 344 residues: Protein MENT (344 aa).

Positions 1–22 (MVPAACMLLWALLLSLESRAAG) are cleaved as a signal peptide. Over residues 162 to 182 (DMRSPSSKTTVDLSSETTLQQ) the composition is skewed to polar residues. Positions 162-197 (DMRSPSSKTTVDLSSETTLQQWSTPGSTPSPWPKPS) are disordered.

In terms of processing, phosphorylation sites are present in the extracellular medium.

Its subcellular location is the secreted. In terms of biological role, involved in control of cellular proliferation. Onconcogenic modifier contributing to the tumor suppressor function of DNMT3B. This Rattus norvegicus (Rat) protein is Protein MENT (Ment).